The chain runs to 132 residues: Small ribosomal subunit protein uS11 (132 aa).

Belongs to the universal ribosomal protein uS11 family. Part of the 30S ribosomal subunit. Interacts with proteins S7 and S18. Binds to IF-3.

Functionally, located on the platform of the 30S subunit, it bridges several disparate RNA helices of the 16S rRNA. Forms part of the Shine-Dalgarno cleft in the 70S ribosome. The sequence is that of Small ribosomal subunit protein uS11 from Oenococcus oeni (strain ATCC BAA-331 / PSU-1).